Here is a 395-residue protein sequence, read N- to C-terminus: Phosphoglycerate kinase (395 aa).

Substrate contacts are provided by residues 21–23, R36, 59–62, R113, and R146; these read DLN and HLGR. Residues K197, E324, and 350 to 353 each bind ATP; that span reads GGDT.

This sequence belongs to the phosphoglycerate kinase family. Monomer.

It is found in the cytoplasm. The catalysed reaction is (2R)-3-phosphoglycerate + ATP = (2R)-3-phospho-glyceroyl phosphate + ADP. It functions in the pathway carbohydrate degradation; glycolysis; pyruvate from D-glyceraldehyde 3-phosphate: step 2/5. The polypeptide is Phosphoglycerate kinase (Acinetobacter baumannii (strain AB307-0294)).